The primary structure comprises 375 residues: Trans-enoyl reductase BOA5 (375 aa).

Polar residues predominate over residues 1–16; the sequence is MQAVIQTGPGTLQLTE. The segment at 1–21 is disordered; it reads MQAVIQTGPGTLQLTENVPKP. 42 to 45 provides a ligand contact to NADP(+); it reads SDWK. 121 to 128 contacts substrate; the sequence is VGIVTTGL. The segment at 147–168 is disordered; that stretch reads GSAAPQKTRVGPRGWSGGDALT. NADP(+)-binding positions include 185–188, 208–211, tyrosine 226, and 273–274; these read STST, SPHN, and LD. Residue 294–298 coordinates substrate; it reads ALTIF. 363–364 provides a ligand contact to NADP(+); sequence VS.

It belongs to the zinc-containing alcohol dehydrogenase family. In terms of assembly, monomer.

The protein operates within polyketide biosynthesis. In terms of biological role, trans-enoyl reductase; part of the gene cluster A that mediates the biosynthesis of botcinic acid and its botcinin derivatives, acetate-derived polyketides that contribute to virulence when combined with the sesquiterpene botrydial. Botcinic acid and its derivatives have been shown to induce chlorosis and necrosis during host plant infection, but also have antifungal activities. Two polyketide synthases, BOA6 and BOA9, are involved in the biosynthesis of botcinins. BOA6 mediates the formation of the per-methylated tetraketide core by condensation of four units of malonyl-CoA with one unit of acetyl-CoA, which would be methylated in activated methylene groups to yield a bicyclic acid intermediate that could then either be converted to botrylactone derivatives or lose the starter acetate unit through a retro-Claisen type C-C bond cleavage to yield botcinin derivatives. The second polyketide synthase, BOA9, is probably required for the biosynthesis of the tetraketide side chain of botcinins. The methyltransferase (MT) domain within BOA6 is probably responsible for the incorporation of four methyl groups. The trans-enoyl reductase BOA5 might take over the enoyl reductase function of BOA6 that misses an ER domain. The monooxygenases BOA2, BOA3 and BOA4 might be involved in further hydroxylations at C4, C5 and C8, whereas BOA7, close to BOA9, could potentially be involved in the hydroxylation at C4 in the side chain of botcinins. This is Trans-enoyl reductase BOA5 from Botryotinia fuckeliana (strain B05.10) (Noble rot fungus).